A 177-amino-acid chain; its full sequence is uncharacterized protein (177 aa).

A compositionally biased stretch (low complexity) spans 100 to 115 (QVQPHQQTHQQSQQTH). The segment at 100-135 (QVQPHQQTHQQSQQTHNKTVANSGDPPPPPPSQPNK) is disordered. Residues 141–158 (WIVGMVIGVVVLYLLYRY) traverse the membrane as a helical segment.

The protein resides in the membrane. This is an uncharacterized protein from Aedes vexans (Inland floodwater mosquito).